A 407-amino-acid chain; its full sequence is Na(+)-translocating NADH-quinone reductase subunit F (407 aa).

A helical transmembrane segment spans residues 3 to 23 (IILGVVMFTLIVLALTVMILF). The 95-residue stretch at 32–126 (GDITIDINED…NLKIELPEEI (95 aa)) folds into the 2Fe-2S ferredoxin-type domain. [2Fe-2S] cluster contacts are provided by Cys69, Cys75, Cys78, and Cys110. Positions 129–269 (VKKWECEVIS…SGPFGEFFAK (141 aa)) constitute an FAD-binding FR-type domain.

The protein belongs to the NqrF family. Composed of six subunits; NqrA, NqrB, NqrC, NqrD, NqrE and NqrF. It depends on [2Fe-2S] cluster as a cofactor. FAD serves as cofactor.

The protein resides in the cell inner membrane. It catalyses the reaction a ubiquinone + n Na(+)(in) + NADH + H(+) = a ubiquinol + n Na(+)(out) + NAD(+). Its function is as follows. NQR complex catalyzes the reduction of ubiquinone-1 to ubiquinol by two successive reactions, coupled with the transport of Na(+) ions from the cytoplasm to the periplasm. The first step is catalyzed by NqrF, which accepts electrons from NADH and reduces ubiquinone-1 to ubisemiquinone by a one-electron transfer pathway. This chain is Na(+)-translocating NADH-quinone reductase subunit F, found in Yersinia enterocolitica serotype O:8 / biotype 1B (strain NCTC 13174 / 8081).